Consider the following 455-residue polypeptide: Chromosomal replication initiator protein DnaA (455 aa).

The domain I, interacts with DnaA modulators stretch occupies residues 1–75; that stretch reads MDTNNNIEKE…EILSQNKVGM (75 aa). Residues 75–106 form a domain II region; sequence MHLAHSVDVRIEVAPKIQISAQPNINYKAVKT. The interval 107 to 321 is domain III, AAA+ region; the sequence is SVKDSYTFEN…GAIIKISVNA (215 aa). Residues glycine 151, glycine 153, lysine 154, and threonine 155 each contribute to the ATP site. The domain IV, binds dsDNA stretch occupies residues 322–455; sequence NLMNAPIDLN…DKKTAFHSSE (134 aa).

It belongs to the DnaA family. As to quaternary structure, oligomerizes as a right-handed, spiral filament on DNA at oriC.

The protein resides in the cytoplasm. Functionally, plays an essential role in the initiation and regulation of chromosomal replication. ATP-DnaA binds to the origin of replication (oriC) to initiate formation of the DNA replication initiation complex once per cell cycle. Binds the DnaA box (a 9 base pair repeat at the origin) and separates the double-stranded (ds)DNA. Forms a right-handed helical filament on oriC DNA; dsDNA binds to the exterior of the filament while single-stranded (ss)DNA is stabiized in the filament's interior. The ATP-DnaA-oriC complex binds and stabilizes one strand of the AT-rich DNA unwinding element (DUE), permitting loading of DNA polymerase. After initiation quickly degrades to an ADP-DnaA complex that is not apt for DNA replication. Binds acidic phospholipids. The polypeptide is Chromosomal replication initiator protein DnaA (Helicobacter pylori (strain Shi470)).